The chain runs to 276 residues: Shikimate dehydrogenase (NADP(+)) (276 aa).

Shikimate is bound by residues 20–22 and Thr-67; that span reads SRS. Catalysis depends on Lys-71, which acts as the Proton acceptor. An NADP(+)-binding site is contributed by Asp-83. Shikimate contacts are provided by Asn-92 and Asp-107. NADP(+)-binding positions include 131–135 and Ile-217; that span reads GAGGA. Residue Tyr-219 participates in shikimate binding. NADP(+) is bound at residue Gly-240.

It belongs to the shikimate dehydrogenase family. In terms of assembly, homodimer.

The enzyme catalyses shikimate + NADP(+) = 3-dehydroshikimate + NADPH + H(+). It functions in the pathway metabolic intermediate biosynthesis; chorismate biosynthesis; chorismate from D-erythrose 4-phosphate and phosphoenolpyruvate: step 4/7. In terms of biological role, involved in the biosynthesis of the chorismate, which leads to the biosynthesis of aromatic amino acids. Catalyzes the reversible NADPH linked reduction of 3-dehydroshikimate (DHSA) to yield shikimate (SA). This Acidiphilium cryptum (strain JF-5) protein is Shikimate dehydrogenase (NADP(+)).